Reading from the N-terminus, the 312-residue chain is Formimidoylglutamase (312 aa).

Histidine 123, aspartate 152, histidine 154, aspartate 156, cysteine 243, and aspartate 245 together coordinate Mn(2+).

Belongs to the arginase family. Mn(2+) serves as cofactor.

It carries out the reaction N-formimidoyl-L-glutamate + H2O = formamide + L-glutamate. It functions in the pathway amino-acid degradation; L-histidine degradation into L-glutamate; L-glutamate from N-formimidoyl-L-glutamate (hydrolase route): step 1/1. Its function is as follows. Catalyzes the conversion of N-formimidoyl-L-glutamate to L-glutamate and formamide. This is Formimidoylglutamase from Pseudomonas fluorescens (strain ATCC BAA-477 / NRRL B-23932 / Pf-5).